We begin with the raw amino-acid sequence, 375 residues long: Trans-enoyl reductase iccB (375 aa).

Position 48 to 51 (48 to 51) interacts with NADP(+); the sequence is VDAK. Residue 143–150 participates in substrate binding; it reads AAVATVGL. NADP(+) contacts are provided by residues 204–207, Y222, and 269–270; these read SSAS and LD. 289-293 lines the substrate pocket; that stretch reads TYSQF. NADP(+) is bound at residue 358–359; that stretch reads IK.

It belongs to the zinc-containing alcohol dehydrogenase family. In terms of assembly, monomer.

The enzyme catalyses N-[(4E,6E,10S,12Z,14E)-6,10-dimethyl-3-oxohexadeca-4,6,12,14-tetraenoyl]-L-tyrosyl-[ACP] = (3E,5S)-3-[(2E,4E,8S,10E,12Z)-1-hydroxy-4,8-dimethyltetradeca-2,4,10,12-tetraen-1-ylidene]-5-[(4-hydroxyphenyl)methyl]pyrrolidine-2,4-dione + holo-[ACP] + H(+). It functions in the pathway mycotoxin biosynthesis. Trans-enoyl reductase; part of the gene cluster that mediates the biosynthesis of ilicicolin H, a 4-hydroxy-2-pyridonealkaloid that has potent and broad antifungal activities by inhibiting the mitochondrial respiration chain. IccB collaborates with the hybrid PKS-NRPS synthetase iccA to assemble the backbone of ilicicolin H. The PKS portion of iccA and trans-acting enoyl reductase iccB work together to construct an octaketide, and two methyl groups are introduced by the MT domain of iccA during the chain assembly. The nascent chain is then condensed with tyrosine, catalyzed by the iliA C domain, and the resulting PKS-NRPS hybrid is offloaded by the iliA RED domain to form an advanced tetramic acid intermediate. The biosynthesis of ilicicolin H starts with formation of the tetramic acid by the hybrid PKS-NRPS synthetase iccA with the partnering trans-enoyl reductase iccB since iccA lacks a designated enoylreductase (ER) domain. The cytochrome P450 monooxygenase iccC then catalyzes the ring expansion of the tetramate to the acyclic 2-pyridone. The pericyclase iccD further converts the acyclic 2-pyridone into 8-epi-ilicicolin H. Finally, the epimerase iccE converts 8-epi-ilicicolin H into ilicicolin H via epimerization. IccA to iccE are sufficient for ilicicolin H biosynthesis and the roles of the remaining enzymes, iccF, iccG and iccH within the pathway have still to be determined. The sequence is that of Trans-enoyl reductase iccB from Talaromyces variabilis (Penicillium variabile).